Here is a 207-residue protein sequence, read N- to C-terminus: Large ribosomal subunit protein uL4 (207 aa).

Residues 44 to 77 form a disordered region; it reads LRQGTHKTKGRSEVRGGGRKPWRQKGTGRARQGS. The segment covering 60–71 has biased composition (basic residues); it reads GGRKPWRQKGTG.

Belongs to the universal ribosomal protein uL4 family. In terms of assembly, part of the 50S ribosomal subunit.

In terms of biological role, one of the primary rRNA binding proteins, this protein initially binds near the 5'-end of the 23S rRNA. It is important during the early stages of 50S assembly. It makes multiple contacts with different domains of the 23S rRNA in the assembled 50S subunit and ribosome. Forms part of the polypeptide exit tunnel. The chain is Large ribosomal subunit protein uL4 from Shouchella clausii (strain KSM-K16) (Alkalihalobacillus clausii).